The sequence spans 354 residues: Inactive ADP-ribosyltransferase ARH2 (354 aa).

The residue at position 27 (Ser27) is a Phosphoserine.

This sequence belongs to the ADP-ribosylglycohydrolase family.

The protein resides in the cytoplasm. It is found in the myofibril. The protein localises to the sarcomere. Functionally, required for myofibril assembly and outgrowth of the cardiac chambers in the developing heart. Appears to be catalytically inactive, showing no activity against O-acetyl-ADP-ribose. The chain is Inactive ADP-ribosyltransferase ARH2 (ADPRHL1) from Homo sapiens (Human).